A 253-amino-acid polypeptide reads, in one-letter code: Mitochondrial inner membrane protease ATP23 (253 aa).

The tract at residues 1-23 is disordered; that stretch reads MSKNADLEAIPAAEEIKKPNPPK. Over residues 14-23 the composition is skewed to basic and acidic residues; sequence EEIKKPNPPK. Residue H152 coordinates a divalent metal cation. E153 is a catalytic residue. A divalent metal cation is bound at residue H156.

It belongs to the peptidase M76 family.

The protein resides in the mitochondrion inner membrane. Its function is as follows. Has a dual role in the assembly of mitochondrial ATPase. Acts as a protease that removes N-terminal residues of mitochondrial ATPase CF(0) subunit 6 at the intermembrane space side. Also involved in the correct assembly of the membrane-embedded ATPase CF(0) particle, probably mediating association of subunit 6 with the subunit 9 ring. The chain is Mitochondrial inner membrane protease ATP23 (ATP23) from Vanderwaltozyma polyspora (strain ATCC 22028 / DSM 70294 / BCRC 21397 / CBS 2163 / NBRC 10782 / NRRL Y-8283 / UCD 57-17) (Kluyveromyces polysporus).